The chain runs to 293 residues: MKISITAPAKINLSLDALYKREDGYHEVEMVMTTIDLADRLYLERLDEDKIVLDVKAHFIPEDRRNLIYQAALLLKKRFDVKMGVRITIDKHIPVSAGLAGGSSDAAAALKGLNVIWELGLSIEELAEISSEIGSDIAFCVYGGTALATGRGEKISALPNIPGCWIVLAKPSISVSTPTIYKELQVDNVEHPDTQKMIESIKNGDLDGIFASTGNVLESVTLEKNPQVKRIKDRMLAFGAEAALMSGSGPTVFALIKQYSRAKRVYNGLRGFCEEVYMVRPWSEGENDTNINN.

The active site involves Lys-10. Pro-94–Ser-104 contributes to the ATP binding site. The active site involves Asp-136.

The protein belongs to the GHMP kinase family. IspE subfamily.

It catalyses the reaction 4-CDP-2-C-methyl-D-erythritol + ATP = 4-CDP-2-C-methyl-D-erythritol 2-phosphate + ADP + H(+). It functions in the pathway isoprenoid biosynthesis; isopentenyl diphosphate biosynthesis via DXP pathway; isopentenyl diphosphate from 1-deoxy-D-xylulose 5-phosphate: step 3/6. Catalyzes the phosphorylation of the position 2 hydroxy group of 4-diphosphocytidyl-2C-methyl-D-erythritol. The polypeptide is 4-diphosphocytidyl-2-C-methyl-D-erythritol kinase (Listeria monocytogenes serotype 4b (strain CLIP80459)).